Here is a 760-residue protein sequence, read N- to C-terminus: Forkhead box protein M1 (760 aa).

2 disordered regions span residues 1-54 (MRTS…AESS) and 95-167 (GKES…SYAG). 2 stretches are compositionally biased toward low complexity: residues 43–54 (PAQASQEVAESS) and 110–124 (SSGG…PQAH). The segment covering 125–134 (SSRDSKRAEV) has biased composition (basic and acidic residues). Positions 140–149 (GPKPAAKGVP) are enriched in low complexity. Residues lysine 199 and lysine 323 each participate in a glycyl lysine isopeptide (Lys-Gly) (interchain with G-Cter in SUMO2) cross-link. The segment at residues 233–325 (ERPPYSYMAM…LTLDQVFKPL (93 aa)) is a DNA-binding region (fork-head). A disordered region spans residues 323 to 348 (KPLEPGSPQSPEHLESQQKRPNPELH). Serine 329 is subject to Phosphoserine. Positions 334–348 (EHLESQQKRPNPELH) are enriched in basic and acidic residues. Lysine 354 is covalently cross-linked (Glycyl lysine isopeptide (Lys-Gly) (interchain with G-Cter in SUMO2)). Serine 374 carries the phosphoserine; by CHEK2 modification. Residues lysine 420 and lysine 438 each participate in a glycyl lysine isopeptide (Lys-Gly) (interchain with G-Cter in SUMO2) cross-link. Disordered stretches follow at residues 500–560 (SWED…PDLF), 577–635 (ESSE…LDFS), and 660–709 (PLKS…IPSL). A Phosphoserine modification is found at serine 521. Basic and acidic residues predominate over residues 531–542 (VTKRREKREVSR). The span at 604–613 (PVSSTPSKSV) shows a compositional bias: polar residues. Threonine 608 carries the phosphothreonine; by CDK1 modification. Threonine 624 is modified (phosphothreonine). Residues serine 727 and serine 736 each carry the phosphoserine; by PLK1 modification.

Phosphorylated in M (mitotic) phase. Phosphorylation by the checkpoint kinase CHEK2 in response to DNA damage increases the FOXM1 protein stability probably stimulating the transcription of genes involved in DNA repair. Phosphorylated by CDK1 in late S and G2 phases, creating docking sites for the POLO box domains of PLK1. Subsequently, PLK1 binds and phosphorylates FOXM1, leading to activation of transcriptional activity and subsequent enhanced expression of key mitotic regulators. Phosphorylated by GSK3B leading to ubiquitination and proteasomal degradation. Expressed in fetal heart, brain, liver, lung, kidney and limb, but only in adult thymus. Appears to be expressed only in adult organs containing proliferating/cycling cells or in response to growth factors.

It is found in the nucleus. In terms of biological role, transcription factor regulating the expression of cell cycle genes essential for DNA replication and mitosis. Plays a role in the control of cell proliferation. Also plays a role in DNA break repair, participating in the DNA damage checkpoint response. Promotes transcription of PHB2. The chain is Forkhead box protein M1 (Foxm1) from Mus musculus (Mouse).